Reading from the N-terminus, the 165-residue chain is MTVTLNRGSITSLMSSSQAVSTLQPAASELKTQLEHKLKSESAEKTREVLWQQYYASNPPDHAVLEVLATPVREALLARFGQHQGPVVPAIDLPELRSVLQQFDSFGKRREAILLQVLEGIKPNESQVGLPYLSELINKELMILLPYNSIVDSLLHNSHQIDMET.

A 5' secretion signal region spans residues 2-11 (TVTLNRGSIT). The 3' secretion signal stretch occupies residues 131 to 149 (PYLSELINKELMILLPYNS).

This sequence belongs to the YopR family.

The protein localises to the secreted. Its function is as follows. May be involved in the regulation of the assembly of the type III secretion system (T3SS), also called injectisome, which is used to inject bacterial effector proteins into eukaryotic host cells. May control the secretion and/or polymerization of YscF/SctF, the principal component of the needle filament, thereby impacting the assembly of the T3SS. Involved in pathogenesis. Essential for the establishment of Yersinia infections in a mouse model system. This is Type 3 secretion system regulator YopR from Yersinia enterocolitica.